The primary structure comprises 701 residues: Elongation factor G (701 aa).

The 283-residue stretch at 8 to 290 (SLYRNIGISA…AVIDYLPAPT (283 aa)) folds into the tr-type G domain. GTP is bound by residues 17-24 (AHIDAGKT), 88-92 (DTPGH), and 142-145 (NKMD).

Belongs to the TRAFAC class translation factor GTPase superfamily. Classic translation factor GTPase family. EF-G/EF-2 subfamily.

It is found in the cytoplasm. Functionally, catalyzes the GTP-dependent ribosomal translocation step during translation elongation. During this step, the ribosome changes from the pre-translocational (PRE) to the post-translocational (POST) state as the newly formed A-site-bound peptidyl-tRNA and P-site-bound deacylated tRNA move to the P and E sites, respectively. Catalyzes the coordinated movement of the two tRNA molecules, the mRNA and conformational changes in the ribosome. The chain is Elongation factor G from Haemophilus ducreyi (strain 35000HP / ATCC 700724).